We begin with the raw amino-acid sequence, 353 residues long: Photosystem II protein D1 (353 aa).

An N-acetylthreonine modification is found at Thr2. At Thr2 the chain carries Phosphothreonine. 3 helical membrane passes run 29-46 (YIGW…TATS), 118-133 (HFLL…EWEL), and 142-156 (WIAV…AAAA). Chlorophyll a is bound at residue His118. Residue Tyr126 participates in pheophytin a binding. 2 residues coordinate [CaMn4O5] cluster: Asp170 and Glu189. The chain crosses the membrane as a helical span at residues 197 to 218 (FHMLGVAGVFGGSLFSAMHGSL). His198 lines the chlorophyll a pocket. A quinone-binding positions include His215 and 264-265 (SF). Fe cation is bound at residue His215. His272 is a binding site for Fe cation. Residues 274-288 (FLAAWPVVGIWFTAL) form a helical membrane-spanning segment. [CaMn4O5] cluster contacts are provided by His332, Glu333, Asp342, and Ala344. A propeptide spanning residues 345 to 353 (SVEAPSVKA) is cleaved from the precursor.

Belongs to the reaction center PufL/M/PsbA/D family. In terms of assembly, PSII is composed of 1 copy each of membrane proteins PsbA, PsbB, PsbC, PsbD, PsbE, PsbF, PsbH, PsbI, PsbJ, PsbK, PsbL, PsbM, PsbT, PsbX, PsbY, PsbZ, Psb30/Ycf12, at least 3 peripheral proteins of the oxygen-evolving complex and a large number of cofactors. It forms dimeric complexes. The D1/D2 heterodimer binds P680, chlorophylls that are the primary electron donor of PSII, and subsequent electron acceptors. It shares a non-heme iron and each subunit binds pheophytin, quinone, additional chlorophylls, carotenoids and lipids. D1 provides most of the ligands for the Mn4-Ca-O5 cluster of the oxygen-evolving complex (OEC). There is also a Cl(-1) ion associated with D1 and D2, which is required for oxygen evolution. The PSII complex binds additional chlorophylls, carotenoids and specific lipids. serves as cofactor. In terms of processing, tyr-161 forms a radical intermediate that is referred to as redox-active TyrZ, YZ or Y-Z. Post-translationally, C-terminally processed by CTPA; processing is essential to allow assembly of the oxygen-evolving complex and thus photosynthetic growth.

Its subcellular location is the plastid. It localises to the chloroplast thylakoid membrane. It catalyses the reaction 2 a plastoquinone + 4 hnu + 2 H2O = 2 a plastoquinol + O2. Its function is as follows. Photosystem II (PSII) is a light-driven water:plastoquinone oxidoreductase that uses light energy to abstract electrons from H(2)O, generating O(2) and a proton gradient subsequently used for ATP formation. It consists of a core antenna complex that captures photons, and an electron transfer chain that converts photonic excitation into a charge separation. The D1/D2 (PsbA/PsbD) reaction center heterodimer binds P680, the primary electron donor of PSII as well as several subsequent electron acceptors. The chain is Photosystem II protein D1 from Angiopteris evecta (Mule's foot fern).